The primary structure comprises 449 residues: Type 3 secretion system ATPase (449 aa).

178–183 (GCGKTT) is an ATP binding site.

The protein belongs to the ATPase alpha/beta chains family. T3SS ATPase subfamily. The core secretion machinery of the T3SS is composed of approximately 20 different proteins, including cytoplasmic components, a base, an export apparatus and a needle. This subunit is part of the cytosolic complex. Forms homododecamers. Comprises two hexameric rings that are probably stacked face-to-face by the association of their C-terminal domains. Also present as monomer and homohexamer in solution.

Its subcellular location is the cytoplasm. It catalyses the reaction ATP + H2O + cellular proteinSide 1 = ADP + phosphate + cellular proteinSide 2.. With respect to regulation, oligomerization increases ATPase activity. In terms of biological role, ATPase component of the type III secretion system (T3SS), also called injectisome, which is used to inject bacterial effector proteins into eukaryotic host cells. Acts as a molecular motor to provide the energy that is required for the export of proteins. Required for type III secretion apparatus (T3SA) formation, proper protein secretion, host cell invasion and virulence. May play a critical role in T3SS substrate recognition, disassembly of the effector/chaperone complex and unfolding of the effector in an ATP-dependent manner prior to secretion. This chain is Type 3 secretion system ATPase, found in Pseudomonas savastanoi pv. phaseolicola (Pseudomonas syringae pv. phaseolicola).